Reading from the N-terminus, the 193-residue chain is MSALRLIVGLGNPGPEHAQTRHNAGFRFVDALAERTGARWGLDSKLFGETAKAEIAGHTVWLLKPATFMNLSGKSITAALRFWKIEPEQLLVAHDELDLAPGTARLKFDGGHGGQNGLRDTIRLLGHGKFHRLRVGIGHPGHKDRVVPWVLGRAGRDDDMAIGEAVDAAIDALPLALDGNFNEAMKRLHTPKK.

A tRNA-binding site is contributed by His17. His22 (proton acceptor) is an active-site residue. TRNA-binding residues include Phe68, Asn70, and Asn116.

Belongs to the PTH family. In terms of assembly, monomer.

Its subcellular location is the cytoplasm. It catalyses the reaction an N-acyl-L-alpha-aminoacyl-tRNA + H2O = an N-acyl-L-amino acid + a tRNA + H(+). Hydrolyzes ribosome-free peptidyl-tRNAs (with 1 or more amino acids incorporated), which drop off the ribosome during protein synthesis, or as a result of ribosome stalling. In terms of biological role, catalyzes the release of premature peptidyl moieties from peptidyl-tRNA molecules trapped in stalled 50S ribosomal subunits, and thus maintains levels of free tRNAs and 50S ribosomes. This Xanthomonas campestris pv. campestris (strain ATCC 33913 / DSM 3586 / NCPPB 528 / LMG 568 / P 25) protein is Peptidyl-tRNA hydrolase.